The sequence spans 427 residues: 3-phosphoshikimate 1-carboxyvinyltransferase (427 aa).

3-phosphoshikimate contacts are provided by K22, S23, and R27. Phosphoenolpyruvate is bound at residue K22. G96 and R124 together coordinate phosphoenolpyruvate. 3-phosphoshikimate is bound by residues S170, S171, Q172, S198, D313, N336, and K340. A phosphoenolpyruvate-binding site is contributed by Q172. Residue D313 is the Proton acceptor of the active site. Phosphoenolpyruvate-binding residues include R344, R386, and K411.

It belongs to the EPSP synthase family. As to quaternary structure, monomer.

The protein localises to the cytoplasm. It catalyses the reaction 3-phosphoshikimate + phosphoenolpyruvate = 5-O-(1-carboxyvinyl)-3-phosphoshikimate + phosphate. Its pathway is metabolic intermediate biosynthesis; chorismate biosynthesis; chorismate from D-erythrose 4-phosphate and phosphoenolpyruvate: step 6/7. Catalyzes the transfer of the enolpyruvyl moiety of phosphoenolpyruvate (PEP) to the 5-hydroxyl of shikimate-3-phosphate (S3P) to produce enolpyruvyl shikimate-3-phosphate and inorganic phosphate. The chain is 3-phosphoshikimate 1-carboxyvinyltransferase from Aeromonas salmonicida (strain A449).